The primary structure comprises 156 residues: Ribosomal RNA large subunit methyltransferase H (156 aa).

S-adenosyl-L-methionine-binding positions include leucine 73, glycine 104, and isoleucine 123 to leucine 128.

This sequence belongs to the RNA methyltransferase RlmH family. As to quaternary structure, homodimer.

The protein localises to the cytoplasm. The enzyme catalyses pseudouridine(1915) in 23S rRNA + S-adenosyl-L-methionine = N(3)-methylpseudouridine(1915) in 23S rRNA + S-adenosyl-L-homocysteine + H(+). Its function is as follows. Specifically methylates the pseudouridine at position 1915 (m3Psi1915) in 23S rRNA. The protein is Ribosomal RNA large subunit methyltransferase H of Herminiimonas arsenicoxydans.